The following is a 137-amino-acid chain: UPF0768 protein C1952.04c (137 aa).

Positions 79-93 (QRRRREDLPTPERPE) are enriched in basic and acidic residues. The disordered stretch occupies residues 79–137 (QRRRREDLPTPERPEASAQQHAFFPGSSSQQTDIPNVRPQPHIPPPRKSDEAPPPYSYK). Residues 119-137 (PHIPPPRKSDEAPPPYSYK) show a composition bias toward pro residues.

This sequence belongs to the UPF0768 family.

This chain is UPF0768 protein C1952.04c, found in Schizosaccharomyces pombe (strain 972 / ATCC 24843) (Fission yeast).